A 243-amino-acid polypeptide reads, in one-letter code: MAELLLGVNIDHIATLRNARGTDYPDPVQAAFIAEQAGADGITVHLREDRRHITDRDVRILRQTLHTRMNLEMAVTEEMLAIAVETRPHFCCLVPEKRQEVTTEGGLDVAGQRDKMRDACARLAAAGIQVSLFIDADETQINAAAEVGAPFIEIHTGCYANAETDAEQAKELARIASAATLAARLGLKVNAGHGLTYHNVKAIAALPEMHELNIGHAIIGRAVMTGLKEAVAEMKRLMLEARG.

Asn9 serves as a coordination point for 3-amino-2-oxopropyl phosphate. A 1-deoxy-D-xylulose 5-phosphate-binding site is contributed by 11 to 12 (DH). Arg20 lines the 3-amino-2-oxopropyl phosphate pocket. Catalysis depends on His45, which acts as the Proton acceptor. 1-deoxy-D-xylulose 5-phosphate is bound by residues Arg47 and His52. Glu72 serves as the catalytic Proton acceptor. Position 102 (Thr102) interacts with 1-deoxy-D-xylulose 5-phosphate. The active-site Proton donor is the His193. Residues Gly194 and 215–216 (GH) contribute to the 3-amino-2-oxopropyl phosphate site.

Belongs to the PNP synthase family. Homooctamer; tetramer of dimers.

It localises to the cytoplasm. It catalyses the reaction 3-amino-2-oxopropyl phosphate + 1-deoxy-D-xylulose 5-phosphate = pyridoxine 5'-phosphate + phosphate + 2 H2O + H(+). It functions in the pathway cofactor biosynthesis; pyridoxine 5'-phosphate biosynthesis; pyridoxine 5'-phosphate from D-erythrose 4-phosphate: step 5/5. Functionally, catalyzes the complicated ring closure reaction between the two acyclic compounds 1-deoxy-D-xylulose-5-phosphate (DXP) and 3-amino-2-oxopropyl phosphate (1-amino-acetone-3-phosphate or AAP) to form pyridoxine 5'-phosphate (PNP) and inorganic phosphate. This is Pyridoxine 5'-phosphate synthase from Salmonella typhimurium (strain LT2 / SGSC1412 / ATCC 700720).